The chain runs to 284 residues: D-tagatose-1,6-bisphosphate aldolase subunit GatY (284 aa).

The active-site Proton donor is the D82. Zn(2+)-binding residues include H83 and H180. A dihydroxyacetone phosphate-binding site is contributed by G181. H208 contacts Zn(2+). Residues 209–211 (GAS) and 230–233 (NVAT) contribute to the dihydroxyacetone phosphate site.

Belongs to the class II fructose-bisphosphate aldolase family. TagBP aldolase GatY subfamily. Forms a complex with GatZ. The cofactor is Zn(2+).

The enzyme catalyses D-tagatofuranose 1,6-bisphosphate = D-glyceraldehyde 3-phosphate + dihydroxyacetone phosphate. It participates in carbohydrate metabolism; D-tagatose 6-phosphate degradation; D-glyceraldehyde 3-phosphate and glycerone phosphate from D-tagatose 6-phosphate: step 2/2. Catalytic subunit of the tagatose-1,6-bisphosphate aldolase GatYZ, which catalyzes the reversible aldol condensation of dihydroxyacetone phosphate (DHAP or glycerone-phosphate) with glyceraldehyde 3-phosphate (G3P) to produce tagatose 1,6-bisphosphate (TBP). Requires GatZ subunit for full activity and stability. Is involved in the catabolism of galactitol. The sequence is that of D-tagatose-1,6-bisphosphate aldolase subunit GatY from Escherichia coli O17:K52:H18 (strain UMN026 / ExPEC).